Consider the following 184-residue polypeptide: Ribosome maturation factor RimM (184 aa).

In terms of domain architecture, PRC barrel spans 112–184 (TDSYYWIDLI…SNKTISLDWQ (73 aa)).

The protein belongs to the RimM family. Binds ribosomal protein uS19.

It localises to the cytoplasm. Functionally, an accessory protein needed during the final step in the assembly of 30S ribosomal subunit, possibly for assembly of the head region. Essential for efficient processing of 16S rRNA. May be needed both before and after RbfA during the maturation of 16S rRNA. It has affinity for free ribosomal 30S subunits but not for 70S ribosomes. This chain is Ribosome maturation factor RimM, found in Polynucleobacter necessarius subsp. necessarius (strain STIR1).